A 332-amino-acid polypeptide reads, in one-letter code: 2,3-diketo-L-gulonate reductase (332 aa).

His44 acts as the Proton donor in catalysis. NAD(+)-binding positions include 168-174 (ITMVDMS), 224-225 (WK), and 304-306 (GHE).

The protein belongs to the LDH2/MDH2 oxidoreductase family. DlgD subfamily. Homodimer.

Its subcellular location is the cytoplasm. It catalyses the reaction 3-dehydro-L-gulonate + NAD(+) = 2,3-dioxo-L-gulonate + NADH + H(+). It carries out the reaction 3-dehydro-L-gulonate + NADP(+) = 2,3-dioxo-L-gulonate + NADPH + H(+). Catalyzes the reduction of 2,3-diketo-L-gulonate in the presence of NADH, to form 3-keto-L-gulonate. The chain is 2,3-diketo-L-gulonate reductase from Escherichia coli (strain K12 / MC4100 / BW2952).